The chain runs to 320 residues: uncharacterized protein (320 aa).

The protein belongs to the NAD(P)-dependent epimerase/dehydratase family.

This is an uncharacterized protein from Staphylococcus saprophyticus subsp. saprophyticus (strain ATCC 15305 / DSM 20229 / NCIMB 8711 / NCTC 7292 / S-41).